Here is a 148-residue protein sequence, read N- to C-terminus: Small ribosomal subunit protein uS13 (148 aa).

Positions 128-148 are disordered; it reads RGQRTKSTGRRGSTIGVRKKK.

This sequence belongs to the universal ribosomal protein uS13 family. As to quaternary structure, part of the 30S ribosomal subunit. Forms a loose heterodimer with protein S19. Forms two bridges to the 50S subunit in the 70S ribosome.

In terms of biological role, located at the top of the head of the 30S subunit, it contacts several helices of the 16S rRNA. In the 70S ribosome it contacts the 23S rRNA (bridge B1a) and protein L5 of the 50S subunit (bridge B1b), connecting the 2 subunits; these bridges are implicated in subunit movement. This Methanococcoides burtonii (strain DSM 6242 / NBRC 107633 / OCM 468 / ACE-M) protein is Small ribosomal subunit protein uS13.